The primary structure comprises 430 residues: Serine--tRNA ligase (430 aa).

237–239 contacts L-serine; that stretch reads TAE. Residue 268–270 participates in ATP binding; the sequence is RSE. Position 291 (Glu291) interacts with L-serine. Residue 355–358 coordinates ATP; that stretch reads EISS. Residue Ser391 participates in L-serine binding.

Belongs to the class-II aminoacyl-tRNA synthetase family. Type-1 seryl-tRNA synthetase subfamily. Homodimer. The tRNA molecule binds across the dimer.

It localises to the cytoplasm. The catalysed reaction is tRNA(Ser) + L-serine + ATP = L-seryl-tRNA(Ser) + AMP + diphosphate + H(+). The enzyme catalyses tRNA(Sec) + L-serine + ATP = L-seryl-tRNA(Sec) + AMP + diphosphate + H(+). It participates in aminoacyl-tRNA biosynthesis; selenocysteinyl-tRNA(Sec) biosynthesis; L-seryl-tRNA(Sec) from L-serine and tRNA(Sec): step 1/1. Its function is as follows. Catalyzes the attachment of serine to tRNA(Ser). Is also able to aminoacylate tRNA(Sec) with serine, to form the misacylated tRNA L-seryl-tRNA(Sec), which will be further converted into selenocysteinyl-tRNA(Sec). The polypeptide is Serine--tRNA ligase (Salmonella paratyphi C (strain RKS4594)).